The chain runs to 201 residues: Lipopolysaccharide core heptose(II)-phosphate phosphatase (201 aa).

An N-terminal signal peptide occupies residues methionine 1 to serine 35.

This sequence belongs to the phosphoglycerate mutase family. Ais subfamily.

It localises to the periplasm. It functions in the pathway bacterial outer membrane biogenesis; lipopolysaccharide metabolism. Its function is as follows. Catalyzes the dephosphorylation of heptose(II) of the outer membrane lipopolysaccharide core. This is Lipopolysaccharide core heptose(II)-phosphate phosphatase from Salmonella paratyphi A (strain AKU_12601).